Reading from the N-terminus, the 976-residue chain is 3-hydroxy-3-methylglutaryl-coenzyme A reductase (976 aa).

Residues 1–36 (MDHEGCQGQHPQQCCQWVSNAWSEFLDLLKNAETLD) are Lumenal-facing. An SSD domain is found at 36-217 (DIVIMLLGYI…FTFYTAILSI (182 aa)). The chain crosses the membrane as a helical span at residues 37–57 (IVIMLLGYIAMHLTFVSLFLS). The Cytoplasmic portion of the chain corresponds to 58–64 (MRKMGSK). A helical transmembrane segment spans residues 65–85 (FWLGICTLFSSVFAFLFGLVV). Over 86–90 (TTKLG) the chain is Lumenal. A helical membrane pass occupies residues 91 to 111 (VPISVILLSEGLPFLVVTIGF). Topologically, residues 112–169 (EKNIVLTRAVMSHAIEHRRIQAQNSKSGKRSPDGSTQNMIQYAVQAAIKEKGFEIIRD) are cytoplasmic. The helical transmembrane segment at 170-190 (YAIEIVILVIGAASGVQGGLQ) threads the bilayer. Residues 191-193 (QFC) are Lumenal-facing. Residues 194-214 (FLAAWTLFFDFILLFTFYTAI) traverse the membrane as a helical segment. Residues 215–272 (LSIKLRSTVSSVMSICVWPLRMMASRRVAENVAKGDDELNRVRGDAPLFGRKSSSIPK) lie on the Cytoplasmic side of the membrane. A helical membrane pass occupies residues 273 to 293 (FKVLMILGFIFVNIVNICSIP). Over 294-401 (FRNPSSMSTI…GGILKSLEDP (108 aa)) the chain is Lumenal. A helical transmembrane segment spans residues 402–422 (VLSKWIVIALALSVALNGYLF). Residues 423–976 (NVARWGIKDP…RYSEVKAIDE (554 aa)) are Cytoplasmic-facing. The active-site Charge relay system is the E618. 624 to 630 (SASRGCK) serves as a coordination point for CoA. NADP(+) contacts are provided by residues 685–687 (SRF) and 712–720 (DAMGMNMIS). K752 (charge relay system) is an active-site residue. 781–783 (VLK) is a binding site for CoA. D828 acts as the Charge relay system in catalysis. 923–924 (AH) serves as a coordination point for CoA. H924 acts as the Proton donor in catalysis. Residues 926-954 (QHNRSAAPSRSTTPGSSHDARLTGHDQCP) are disordered. 928-929 (NR) contributes to the NADP(+) binding site. The segment covering 928 to 941 (NRSAAPSRSTTPGS) has biased composition (polar residues). Basic and acidic residues predominate over residues 943-953 (HDARLTGHDQC).

Belongs to the HMG-CoA reductase family.

It localises to the endoplasmic reticulum membrane. It carries out the reaction (R)-mevalonate + 2 NADP(+) + CoA = (3S)-3-hydroxy-3-methylglutaryl-CoA + 2 NADPH + 2 H(+). Its pathway is metabolic intermediate biosynthesis; (R)-mevalonate biosynthesis; (R)-mevalonate from acetyl-CoA: step 3/3. In terms of biological role, HMG-CoA reductase; part of the first module of ergosterol biosynthesis pathway that includes the early steps of the pathway, conserved across all eukaryotes, and which results in the formation of mevalonate from acetyl-coenzyme A (acetyl-CoA). In this module, the cytosolic acetyl-CoA acetyltransferase catalyzes the formation of acetoacetyl-CoA. The hydroxymethylglutaryl-CoA synthase then condenses acetyl-CoA with acetoacetyl-CoA to form HMG-CoA. The rate-limiting step of the early module is the reduction to mevalonate by the 3-hydroxy-3-methylglutaryl-coenzyme A (HMG-CoA) reductase HMGR. This Fusarium fujikuroi (Bakanae and foot rot disease fungus) protein is 3-hydroxy-3-methylglutaryl-coenzyme A reductase.